The following is a 123-amino-acid chain: uncharacterized protein (123 aa).

This is an uncharacterized protein from Pasteurella multocida (strain Pm70).